The primary structure comprises 277 residues: Probable xyloglucan endotransglucosylase/hydrolase protein 11 (277 aa).

Positions 1-24 are cleaved as a signal peptide; it reads MRGSDQKILLMVMVVVAVVAAAQG. The GH16 domain occupies 32–209; sequence VTWGNNYYQT…PKQMPYIAKF (178 aa). N50 is a glycosylation site (N-linked (GlcNAc...) asparagine). The active-site Nucleophile is the E107. Xyloglucan contacts are provided by residues 123 to 125 and 133 to 135; these read NTN and GKD. N-linked (GlcNAc...) asparagine glycosylation occurs at N194. Disulfide bonds link C217–C227 and C260–C273. R265 is a xyloglucan binding site.

The protein belongs to the glycosyl hydrolase 16 family. XTH group 1 subfamily. In terms of processing, contains at least one intrachain disulfide bond essential for its enzymatic activity.

The protein localises to the secreted. It is found in the cell wall. The protein resides in the extracellular space. Its subcellular location is the apoplast. The catalysed reaction is breaks a beta-(1-&gt;4) bond in the backbone of a xyloglucan and transfers the xyloglucanyl segment on to O-4 of the non-reducing terminal glucose residue of an acceptor, which can be a xyloglucan or an oligosaccharide of xyloglucan.. May catalyze xyloglucan endohydrolysis (XEH) and/or endotransglycosylation (XET). Cleaves and religates xyloglucan polymers, an essential constituent of the primary cell wall, and thereby participates in cell wall construction of growing tissues. The polypeptide is Probable xyloglucan endotransglucosylase/hydrolase protein 11 (XTH11) (Arabidopsis thaliana (Mouse-ear cress)).